A 416-amino-acid chain; its full sequence is RNA polymerase sigma factor SigA (416 aa).

The segment at M184–T254 is sigma-70 factor domain-2. The Interaction with polymerase core subunit RpoC motif lies at D208–Q211. The tract at residues E263–E338 is sigma-70 factor domain-3. Residues V351–H404 form a sigma-70 factor domain-4 region. A DNA-binding region (H-T-H motif) is located at residues L377–A396.

This sequence belongs to the sigma-70 factor family. RpoD/SigA subfamily. As to quaternary structure, interacts transiently with the RNA polymerase catalytic core.

It localises to the cytoplasm. In terms of biological role, sigma factors are initiation factors that promote the attachment of RNA polymerase to specific initiation sites and are then released. This sigma factor is the primary sigma factor during exponential growth. The polypeptide is RNA polymerase sigma factor SigA (Microcystis aeruginosa).